Consider the following 102-residue polypeptide: Phosphoribosyl-ATP pyrophosphatase (102 aa).

Belongs to the PRA-PH family.

It localises to the cytoplasm. It carries out the reaction 1-(5-phospho-beta-D-ribosyl)-ATP + H2O = 1-(5-phospho-beta-D-ribosyl)-5'-AMP + diphosphate + H(+). It participates in amino-acid biosynthesis; L-histidine biosynthesis; L-histidine from 5-phospho-alpha-D-ribose 1-diphosphate: step 2/9. The sequence is that of Phosphoribosyl-ATP pyrophosphatase from Ignicoccus hospitalis (strain KIN4/I / DSM 18386 / JCM 14125).